Reading from the N-terminus, the 324-residue chain is Rho crystallin (324 aa).

Thr-2 carries the N-acetylthreonine modification. Residue 218 to 281 (SVLGSHRDRN…SFTPARIKQN (64 aa)) participates in NADP(+) binding.

Belongs to the aldo/keto reductase family. As to quaternary structure, monomer.

The sequence is that of Rho crystallin from Aquarana catesbeiana (American bullfrog).